The sequence spans 185 residues: Elongation factor P (185 aa).

It belongs to the elongation factor P family.

The protein localises to the cytoplasm. The protein operates within protein biosynthesis; polypeptide chain elongation. Involved in peptide bond synthesis. Stimulates efficient translation and peptide-bond synthesis on native or reconstituted 70S ribosomes in vitro. Probably functions indirectly by altering the affinity of the ribosome for aminoacyl-tRNA, thus increasing their reactivity as acceptors for peptidyl transferase. The sequence is that of Elongation factor P from Geobacillus sp. (strain WCH70).